Reading from the N-terminus, the 213-residue chain is Endonuclease III (213 aa).

Positions 101–120 constitute a HhH domain; that stretch reads LEELLKLPGVGRKTANIVLW. [4Fe-4S] cluster contacts are provided by Cys-180, Cys-187, Cys-190, and Cys-196.

Belongs to the Nth/MutY family. [4Fe-4S] cluster is required as a cofactor.

The catalysed reaction is 2'-deoxyribonucleotide-(2'-deoxyribose 5'-phosphate)-2'-deoxyribonucleotide-DNA = a 3'-end 2'-deoxyribonucleotide-(2,3-dehydro-2,3-deoxyribose 5'-phosphate)-DNA + a 5'-end 5'-phospho-2'-deoxyribonucleoside-DNA + H(+). DNA repair enzyme that has both DNA N-glycosylase activity and AP-lyase activity. The DNA N-glycosylase activity releases various damaged pyrimidines from DNA by cleaving the N-glycosidic bond, leaving an AP (apurinic/apyrimidinic) site. The AP-lyase activity cleaves the phosphodiester bond 3' to the AP site by a beta-elimination, leaving a 3'-terminal unsaturated sugar and a product with a terminal 5'-phosphate. This chain is Endonuclease III, found in Thermotoga maritima (strain ATCC 43589 / DSM 3109 / JCM 10099 / NBRC 100826 / MSB8).